The following is a 197-amino-acid chain: 7-methyl-GTP pyrophosphatase (197 aa).

Asp69 (proton acceptor) is an active-site residue.

This sequence belongs to the Maf family. YceF subfamily. A divalent metal cation serves as cofactor.

Its subcellular location is the cytoplasm. The catalysed reaction is N(7)-methyl-GTP + H2O = N(7)-methyl-GMP + diphosphate + H(+). Its function is as follows. Nucleoside triphosphate pyrophosphatase that hydrolyzes 7-methyl-GTP (m(7)GTP). May have a dual role in cell division arrest and in preventing the incorporation of modified nucleotides into cellular nucleic acids. The chain is 7-methyl-GTP pyrophosphatase from Pectobacterium atrosepticum (strain SCRI 1043 / ATCC BAA-672) (Erwinia carotovora subsp. atroseptica).